A 672-amino-acid chain; its full sequence is Zinc finger and BTB domain-containing protein 24 (672 aa).

The BTB domain occupies 39–105; sequence CDITLIVEDV…MYSAVVLVDE (67 aa). The disordered stretch occupies residues 136–208; it reads HMQVKRKRGR…GKRKIKQPIR (73 aa). The segment at residues 140–152 is a DNA-binding region (a.T hook 1); sequence KRKRGRPKKNQDL. Residues 148-158 show a composition bias toward basic and acidic residues; the sequence is KNQDLSQKENP. Residues 160–171 are compositionally biased toward polar residues; the sequence is SELQAQTSSEIQ. Residues 198-208 show a composition bias toward basic residues; the sequence is EGKRKIKQPIR. A DNA-binding region (a.T hook 2) is located at residues 223–235; it reads PGKRGRRRKYPDT. 8 consecutive C2H2-type zinc fingers follow at residues 237-259, 265-287, 293-315, 321-343, 349-371, 377-399, 405-427, and 433-455; these read ARCE…QRTH, FRCS…QRMH, YICT…MNLH, FTCE…NRVH, PECA…LRTH, FTCE…IRIH, YVCK…EVSH, and FSCS…IKTH. The interval 453-492 is disordered; it reads KTHNKENPPAQAESTDKPPQSAPEQQEQEQQQQQQTSGDK. The span at 476–487 shows a compositional bias: low complexity; the sequence is EQQEQEQQQQQQ.

Belongs to the krueppel C2H2-type zinc-finger protein family.

Its subcellular location is the nucleus. In terms of biological role, may be involved in BMP2-induced transcription. In Danio rerio (Zebrafish), this protein is Zinc finger and BTB domain-containing protein 24 (zbtb24).